Here is an 853-residue protein sequence, read N- to C-terminus: Leucine-rich repeat and death domain-containing protein 1 (853 aa).

Residues 1 to 78 are disordered; sequence MSEDGSNVEP…EEKNTGIPFS (78 aa). Residues 19–31 show a composition bias toward acidic residues; it reads LEEPGSEISDLLD. The segment covering 56–65 has biased composition (polar residues); that stretch reads QSAASFTSQL. 26 LRR repeats span residues 133 to 157, 159 to 180, 183 to 204, 206 to 227, 229 to 251, 252 to 274, 275 to 297, 298 to 319, 321 to 342, 344 to 365, 367 to 388, 390 to 411, 413 to 435, 436 to 457, 459 to 481, 482 to 503, 505 to 527, 528 to 549, 551 to 573, 574 to 596, 597 to 618, 620 to 641, 646 to 668, 669 to 690, 692 to 713, and 715 to 736; these read MKSD…IVKV, YVKY…DPGD, GLEI…IQLF, NLKI…LLQL, NMRQ…EHLR, YLET…SSLK, NLRI…CFLP, KLNS…VREL, NLES…IFQL, KIKE…IENF, ELRL…ISHC, NLES…IRKL, NLRQ…SHLS, NIHI…IKNC, KITR…CALQ, SLDY…MSFS, QLLH…CSLT, NLEY…ISAM, SLHV…CSLK, NLRV…SKLK, RIQK…LCQL, TLEE…PEEV, QLKI…GELR, SLVS…FLSL, VLQS…IYKL, and SLKE…ICKG. One can recognise a Death domain in the interval 757–845; it reads LEKIFNIVAN…DIMDKITALN (89 aa).

This Mus musculus (Mouse) protein is Leucine-rich repeat and death domain-containing protein 1 (Lrrd1).